A 195-amino-acid chain; its full sequence is Probable GTP-binding protein EngB (195 aa).

The EngB-type G domain occupies 24 to 195; it reads GLSEVALSGR…QIWDLIANYL (172 aa). GTP-binding positions include 32–39, 59–63, 77–80, 144–147, and 176–178; these read GRSNVGKS, GKTQT, DVPG, TKED, and YSS. Mg(2+)-binding residues include S39 and T61.

This sequence belongs to the TRAFAC class TrmE-Era-EngA-EngB-Septin-like GTPase superfamily. EngB GTPase family. The cofactor is Mg(2+).

Functionally, necessary for normal cell division and for the maintenance of normal septation. In Staphylococcus haemolyticus (strain JCSC1435), this protein is Probable GTP-binding protein EngB.